Reading from the N-terminus, the 143-residue chain is Transcriptional regulator MraZ (143 aa).

2 consecutive SpoVT-AbrB domains span residues 5–47 (TYTP…PKEE) and 76–119 (TDEQ…DKQA).

It belongs to the MraZ family. Forms oligomers.

Its subcellular location is the cytoplasm. The protein localises to the nucleoid. The polypeptide is Transcriptional regulator MraZ (Nocardia farcinica (strain IFM 10152)).